Reading from the N-terminus, the 134-residue chain is Mini-ribonuclease 3 (134 aa).

Residue Asp-22 is part of the active site.

Belongs to the MrnC RNase family. Homodimer. It depends on Mg(2+) as a cofactor.

The protein localises to the cytoplasm. Involved in correct processing of both the 5' and 3' ends of 23S rRNA precursor. Processes 30S rRNA precursor transcript even in absence of ribonuclease 3 (Rnc); Rnc processes 30S rRNA into smaller rRNA precursors. The chain is Mini-ribonuclease 3 from Staphylococcus aureus (strain NCTC 8325 / PS 47).